We begin with the raw amino-acid sequence, 470 residues long: tRNA modification GTPase MnmE (470 aa).

R24, E81, and K122 together coordinate (6S)-5-formyl-5,6,7,8-tetrahydrofolate. One can recognise a TrmE-type G domain in the interval 218–383 (GIKIVIAGKP…LQEYLSNNIK (166 aa)). N228 is a K(+) binding site. Residues 228–233 (NAGKSS), 247–253 (STISGTT), and 272–275 (DTAG) each bind GTP. S232 contacts Mg(2+). The K(+) site is built by S247, I249, and T252. T253 is a Mg(2+) binding site. Residue K470 coordinates (6S)-5-formyl-5,6,7,8-tetrahydrofolate.

It belongs to the TRAFAC class TrmE-Era-EngA-EngB-Septin-like GTPase superfamily. TrmE GTPase family. As to quaternary structure, homodimer. Heterotetramer of two MnmE and two MnmG subunits. It depends on K(+) as a cofactor.

Its subcellular location is the cytoplasm. Its function is as follows. Exhibits a very high intrinsic GTPase hydrolysis rate. Involved in the addition of a carboxymethylaminomethyl (cmnm) group at the wobble position (U34) of certain tRNAs, forming tRNA-cmnm(5)s(2)U34. The chain is tRNA modification GTPase MnmE from Blochmanniella pennsylvanica (strain BPEN).